Reading from the N-terminus, the 520-residue chain is 2-isopropylmalate synthase (520 aa).

Residues 4-266 (VEFLDTTLRD…TSDIVLNETV (263 aa)) form the Pyruvate carboxyltransferase domain. Residues Asp13, His201, His203, and Asn237 each coordinate Mn(2+). Residues 390 to 520 (HFGDLKLTSN…AVSFRDVPTN (131 aa)) are regulatory domain.

The protein belongs to the alpha-IPM synthase/homocitrate synthase family. LeuA type 1 subfamily. Homodimer. Requires Mn(2+) as cofactor.

Its subcellular location is the cytoplasm. The catalysed reaction is 3-methyl-2-oxobutanoate + acetyl-CoA + H2O = (2S)-2-isopropylmalate + CoA + H(+). Its pathway is amino-acid biosynthesis; L-leucine biosynthesis; L-leucine from 3-methyl-2-oxobutanoate: step 1/4. Functionally, catalyzes the condensation of the acetyl group of acetyl-CoA with 3-methyl-2-oxobutanoate (2-ketoisovalerate) to form 3-carboxy-3-hydroxy-4-methylpentanoate (2-isopropylmalate). In Streptococcus gallolyticus (strain UCN34), this protein is 2-isopropylmalate synthase.